The sequence spans 95 residues: uncharacterized protein (95 aa).

This is an uncharacterized protein from Human adenovirus B serotype 7 (HAdV-7).